A 277-amino-acid chain; its full sequence is MGIRVYKPTTNGRRNMTSLDFAEFTTSTPEKSLLVSLKSKAGRNNNGRITVRHQGGGHKRHYRLIDFKRNKDAVEAVVKTIEYDPNRSANIALVHYTDGVKAYIIAPKGLEVGQRIVSGPEADIKVGNALPLANIPVGTLVHNIELKPGRGGELVRAAGASAQVLGQEGKYTLVRLQSGEVRMILGTCRATVGVVGNEQHGLVNLGKAGRSRWKGIRPTVRGSVMNPNDHPHGGGEGKAPVGRKAPSTPWGKPALGLKTRNKKAKSDKLIVRRRNEK.

A disordered region spans residues 219-277 (TVRGSVMNPNDHPHGGGEGKAPVGRKAPSTPWGKPALGLKTRNKKAKSDKLIVRRRNEK). Over residues 264–277 (AKSDKLIVRRRNEK) the composition is skewed to basic and acidic residues.

This sequence belongs to the universal ribosomal protein uL2 family. Part of the 50S ribosomal subunit. Forms a bridge to the 30S subunit in the 70S ribosome.

One of the primary rRNA binding proteins. Required for association of the 30S and 50S subunits to form the 70S ribosome, for tRNA binding and peptide bond formation. It has been suggested to have peptidyltransferase activity; this is somewhat controversial. Makes several contacts with the 16S rRNA in the 70S ribosome. The chain is Large ribosomal subunit protein uL2 from Streptococcus sanguinis (strain SK36).